The primary structure comprises 628 residues: ATP-dependent zinc metalloprotease FtsH 4 (628 aa).

Over 1–14 (MAIKPQPQWQRRLA) the chain is Cytoplasmic. A helical transmembrane segment spans residues 15-35 (SVLLWGSTIYLLVNLLAPALF). Over 36-119 (RSQPPQVPYS…AAAPPAKNSW (84 aa)) the chain is Lumenal. Residues 120 to 140 (FGTLLSWVIPPLIFVGIWSFF) form a helical membrane-spanning segment. At 141–628 (LNRNNNGAPG…QVQAPGTLVV (488 aa)) the chain is on the cytoplasmic side. ATP is bound at residue 214–221 (GPPGTGKT). A Zn(2+)-binding site is contributed by His438. Residue Glu439 is part of the active site. Zn(2+) contacts are provided by His442 and Asp515.

In the central section; belongs to the AAA ATPase family. It in the C-terminal section; belongs to the peptidase M41 family. As to quaternary structure, homohexamer. The cofactor is Zn(2+).

It localises to the cellular thylakoid membrane. Its function is as follows. Acts as a processive, ATP-dependent zinc metallopeptidase for both cytoplasmic and membrane proteins. Plays a role in the quality control of integral membrane proteins. The protein is ATP-dependent zinc metalloprotease FtsH 4 of Synechocystis sp. (strain ATCC 27184 / PCC 6803 / Kazusa).